A 277-amino-acid chain; its full sequence is uncharacterized protein (277 aa).

2 disordered regions span residues 1 to 103 and 254 to 277; these read PPLR…LEDP and PSPS…SPPR. Residues 48–65 are compositionally biased toward basic and acidic residues; that stretch reads RRNDTGKDRGTHRQRAET. The span at 66–77 shows a compositional bias: polar residues; it reads PSRSPVPTTNTV. Residues 82–91 are compositionally biased toward basic residues; that stretch reads PAVRRQRRTQ.

This is an uncharacterized protein from Homo sapiens (Human).